A 196-amino-acid polypeptide reads, in one-letter code: ATP-dependent Clp protease proteolytic subunit (196 aa).

Ser-98 acts as the Nucleophile in catalysis. His-123 is a catalytic residue.

This sequence belongs to the peptidase S14 family. Fourteen ClpP subunits assemble into 2 heptameric rings which stack back to back to give a disk-like structure with a central cavity, resembling the structure of eukaryotic proteasomes.

The protein resides in the cytoplasm. It catalyses the reaction Hydrolysis of proteins to small peptides in the presence of ATP and magnesium. alpha-casein is the usual test substrate. In the absence of ATP, only oligopeptides shorter than five residues are hydrolyzed (such as succinyl-Leu-Tyr-|-NHMec, and Leu-Tyr-Leu-|-Tyr-Trp, in which cleavage of the -Tyr-|-Leu- and -Tyr-|-Trp bonds also occurs).. Its function is as follows. Cleaves peptides in various proteins in a process that requires ATP hydrolysis. Has a chymotrypsin-like activity. Plays a major role in the degradation of misfolded proteins. The sequence is that of ATP-dependent Clp protease proteolytic subunit from Actinobacillus pleuropneumoniae serotype 7 (strain AP76).